The chain runs to 109 residues: Class I hydrophobin 7 (109 aa).

Residues 1-17 (MFAQSFIITALAALAVA) form the signal peptide. Intrachain disulfides connect C28-C88, C35-C82, C36-C69, and C89-C102.

This sequence belongs to the fungal hydrophobin family. As to quaternary structure, self-assembles to form functional amyloid fibrils called rodlets. Self-assembly into fibrillar rodlets occurs spontaneously at hydrophobic:hydrophilic interfaces and the rodlets further associate laterally to form amphipathic monolayers.

It is found in the secreted. The protein localises to the cell wall. Its function is as follows. Aerial growth, conidiation, and dispersal of filamentous fungi in the environment rely upon a capability of their secreting small amphipathic proteins called hydrophobins (HPBs) with low sequence identity. Class I can self-assemble into an outermost layer of rodlet bundles on aerial cell surfaces, conferring cellular hydrophobicity that supports fungal growth, development and dispersal; whereas Class II form highly ordered films at water-air interfaces through intermolecular interactions but contribute nothing to the rodlet structure. Hydph7 is a class I hydrophobin involved in fruiting body development. The polypeptide is Class I hydrophobin 7 (Pleurotus ostreatus (strain PC15) (Oyster mushroom)).